Consider the following 275-residue polypeptide: Release factor glutamine methyltransferase (275 aa).

S-adenosyl-L-methionine is bound by residues Gly-117 to Gly-121, Asp-140, Trp-168, and Asn-182. Residue Asn-182–Tyr-185 coordinates substrate.

This sequence belongs to the protein N5-glutamine methyltransferase family. PrmC subfamily.

It catalyses the reaction L-glutaminyl-[peptide chain release factor] + S-adenosyl-L-methionine = N(5)-methyl-L-glutaminyl-[peptide chain release factor] + S-adenosyl-L-homocysteine + H(+). In terms of biological role, methylates the class 1 translation termination release factors RF1/PrfA and RF2/PrfB on the glutamine residue of the universally conserved GGQ motif. The chain is Release factor glutamine methyltransferase from Buchnera aphidicola subsp. Schizaphis graminum (strain Sg).